Reading from the N-terminus, the 340-residue chain is Tetraacyldisaccharide 4'-kinase (340 aa).

50–57 (HGGGAGKT) is a binding site for ATP.

This sequence belongs to the LpxK family.

The enzyme catalyses a lipid A disaccharide + ATP = a lipid IVA + ADP + H(+). It functions in the pathway glycolipid biosynthesis; lipid IV(A) biosynthesis; lipid IV(A) from (3R)-3-hydroxytetradecanoyl-[acyl-carrier-protein] and UDP-N-acetyl-alpha-D-glucosamine: step 6/6. Transfers the gamma-phosphate of ATP to the 4'-position of a tetraacyldisaccharide 1-phosphate intermediate (termed DS-1-P) to form tetraacyldisaccharide 1,4'-bis-phosphate (lipid IVA). This Rhodopseudomonas palustris (strain BisA53) protein is Tetraacyldisaccharide 4'-kinase.